Reading from the N-terminus, the 193-residue chain is dCTP deaminase (193 aa).

Residues 110–115 (RSSLAR), D128, 136–138 (VLE), Y171, K178, and Q182 each bind dCTP. Catalysis depends on E138, which acts as the Proton donor/acceptor. The interval 169–193 (RPYNRRQDAKYRDQQGAVASRIDKD) is disordered.

It belongs to the dCTP deaminase family. In terms of assembly, homotrimer.

It carries out the reaction dCTP + H2O + H(+) = dUTP + NH4(+). The protein operates within pyrimidine metabolism; dUMP biosynthesis; dUMP from dCTP (dUTP route): step 1/2. In terms of biological role, catalyzes the deamination of dCTP to dUTP. In Salmonella arizonae (strain ATCC BAA-731 / CDC346-86 / RSK2980), this protein is dCTP deaminase.